The chain runs to 192 residues: Pyridoxal 5'-phosphate synthase subunit PdxT (192 aa).

50-52 (GES) contacts L-glutamine. Cys-82 acts as the Nucleophile in catalysis. L-glutamine contacts are provided by residues Arg-109 and 136–137 (IR). Active-site charge relay system residues include His-172 and Glu-174.

The protein belongs to the glutaminase PdxT/SNO family. In terms of assembly, in the presence of PdxS, forms a dodecamer of heterodimers. Only shows activity in the heterodimer.

The enzyme catalyses aldehydo-D-ribose 5-phosphate + D-glyceraldehyde 3-phosphate + L-glutamine = pyridoxal 5'-phosphate + L-glutamate + phosphate + 3 H2O + H(+). The catalysed reaction is L-glutamine + H2O = L-glutamate + NH4(+). The protein operates within cofactor biosynthesis; pyridoxal 5'-phosphate biosynthesis. In terms of biological role, catalyzes the hydrolysis of glutamine to glutamate and ammonia as part of the biosynthesis of pyridoxal 5'-phosphate. The resulting ammonia molecule is channeled to the active site of PdxS. In Haemophilus influenzae (strain PittGG), this protein is Pyridoxal 5'-phosphate synthase subunit PdxT.